Reading from the N-terminus, the 262-residue chain is uncharacterized protein (262 aa).

The region spanning 6–70 (LRINQFLAHY…LKNKKFSVLV (65 aa)) is the S4 RNA-binding domain. The Nucleophile role is filled by Asp108.

This sequence belongs to the pseudouridine synthase RsuA family.

The catalysed reaction is a uridine in RNA = a pseudouridine in RNA. This is an uncharacterized protein from Helicobacter pylori (strain J99 / ATCC 700824) (Campylobacter pylori J99).